The following is a 291-amino-acid chain: Translocon-associated protein subunit alpha (291 aa).

The first 20 residues, 1 to 20 (MRLLPRLLLLLLLVFPATVL), serve as a signal peptide directing secretion. Over 21 to 207 (FRGGPRGSLA…EREDGLDGET (187 aa)) the chain is Lumenal. Residues 34–83 (DLTEDEETVEDSIIEDEDDEAEVEEDEPTDLVEDKEEEDVSGEPEASPSA) form a disordered region. Positions 35 to 75 (LTEDEETVEDSIIEDEDDEAEVEEDEPTDLVEDKEEEDVSG) are enriched in acidic residues. Asn136 and Asn191 each carry an N-linked (GlcNAc...) asparagine glycan. Residues 208 to 228 (IFMYMFLAGLGLLVIVGLHQL) form a helical membrane-spanning segment. The Cytoplasmic portion of the chain corresponds to 229-291 (LESRKRKRPV…AQKRSVGSDE (63 aa)). Ser247 carries the phosphoserine modification. A Phosphothreonine modification is found at Thr260. The segment at 263-291 (QIMQSRRDKASPRRLPRKRAQKRSVGSDE) is disordered. A Phosphoserine modification is found at Ser273. The segment covering 274-284 (PRRLPRKRAQK) has biased composition (basic residues).

The protein belongs to the TRAP-alpha family. Heterotetramer of TRAP-alpha, TRAP-beta, TRAP-delta and TRAP-gamma. Interacts with palmitoylated calnexin (CALX), the interaction is required for efficient folding of glycosylated proteins. In terms of processing, phosphorylated in its cytoplasmic tail.

It is found in the endoplasmic reticulum membrane. In terms of biological role, TRAP proteins are part of a complex whose function is to bind calcium to the ER membrane and thereby regulate the retention of ER resident proteins. May be involved in the recycling of the translocation apparatus after completion of the translocation process or may function as a membrane-bound chaperone facilitating folding of translocated proteins. The polypeptide is Translocon-associated protein subunit alpha (SSR1) (Pongo abelii (Sumatran orangutan)).